A 67-amino-acid polypeptide reads, in one-letter code: Conotoxin VnMMSK-02 (67 aa).

Residues Met-1–Ala-20 form the signal peptide. Positions Leu-21 to Arg-52 are excised as a propeptide. At Gln-53 the chain carries Pyrrolidone carboxylic acid. Disulfide bonds link Cys-54–Cys-66, Cys-55–Cys-62, and Cys-59–Cys-65. Pro-64 carries the 4-hydroxyproline modification. Cys-66 is subject to Cysteine amide.

Belongs to the conotoxin M superfamily. Expressed by the venom duct.

It is found in the secreted. The polypeptide is Conotoxin VnMMSK-02 (Conus ventricosus (Mediterranean cone)).